A 99-amino-acid polypeptide reads, in one-letter code: Protein S100-Z (99 aa).

EF-hand domains are found at residues 13-48 and 50-85; these read ITVF…FLMS and KDPM…LTVA. Ca(2+) contacts are provided by Ser20, Glu23, Asp25, Lys28, Glu33, Asp63, Asn65, Asp67, Glu69, and Glu74.

Belongs to the S-100 family. In terms of assembly, homodimer. Homodimers may assemble into larger stable oligomers. As to expression, in larva at 5 days post-fertilization, shows very restricted expression only in a few large cells of the olfactory placode. More widely expressed in the adult. Expressed at higher levels in gut than in spleen, head kidney and gill.

The polypeptide is Protein S100-Z (Danio rerio (Zebrafish)).